The chain runs to 269 residues: Putative pyruvate, phosphate dikinase regulatory protein (269 aa).

ADP is bound at residue 147–154 (GVSRSSKT).

This sequence belongs to the pyruvate, phosphate/water dikinase regulatory protein family. PDRP subfamily.

The catalysed reaction is N(tele)-phospho-L-histidyl/L-threonyl-[pyruvate, phosphate dikinase] + ADP = N(tele)-phospho-L-histidyl/O-phospho-L-threonyl-[pyruvate, phosphate dikinase] + AMP + H(+). The enzyme catalyses N(tele)-phospho-L-histidyl/O-phospho-L-threonyl-[pyruvate, phosphate dikinase] + phosphate + H(+) = N(tele)-phospho-L-histidyl/L-threonyl-[pyruvate, phosphate dikinase] + diphosphate. Bifunctional serine/threonine kinase and phosphorylase involved in the regulation of the pyruvate, phosphate dikinase (PPDK) by catalyzing its phosphorylation/dephosphorylation. In Trichlorobacter lovleyi (strain ATCC BAA-1151 / DSM 17278 / SZ) (Geobacter lovleyi), this protein is Putative pyruvate, phosphate dikinase regulatory protein.